The chain runs to 760 residues: MALPTIDLKIPEYEECQHKITDFLSHFKQEQVQDGQQNQDISMSDAGDEPFLKSKYMDILQKISNRESNVINVDLNDLYEFDPSDTQLLHNIESNAKRFVELFSQCADALMPPPTVEINYRNEVLDVIMQQRVQRNENIDPEHKGFPPELTRGYDLYFRPVTRNKKPFSVRDLRGENLGSLLTVRGIVTRTSDVKPSLTVNAYTCDRCGYEVFQEIRQKTFLPMSECPSDECKKNDAKGQLFMSTRASKFLPFQEVKIQELTNQVPIGHIPRSLTVHLYGAITRSVNPGDIVDISGIFLPTPYTGFRAMRAGLLTDTYLECHYVSQIIKNYTNIEKTPQSEAAIAELNQGGNVYEKLAKSIAPEIYGHEDVKKALLLLLVGGVTKELGDGMRIRGDINICLTGDPGVAKSQLLKYISKVAPRGVYTTGRGSSGVGLTAAVMRDPVTDEMVLEGGALVLADNGICCIDEFDKMDESDRTAIHEVMEQQTISISKAGITTTLNARTSILAAANPLYGRYNPKVAPIHNINLPAALLSRFDILFLILDTPSRETDEHLAQHVTYVHMHNEQPKMDFEPLDPNMIRHYISSARQYRPVVPKDVCDYVTGAYVQLRQNQKRDEANERQFAHTTPRTLLAILRMGQALARLRFSNRVEIGDVDEALRLMSVSKSSLYDDLDPSSHDTTITSKIYKIIRDMLNSIPDVEGNERSLTLRAIRERVLAKGFTEDHLINTIQEYTDLGVLLTTNNGQTIMFLDPDLHMEN.

Residues 353–559 form the MCM domain; that stretch reads VYEKLAKSIA…ETDEHLAQHV (207 aa). The ATP site is built by Y366, G406, A408, K409, S410, N511, R536, and R630. Residues 535 to 538 carry the Arginine finger motif; the sequence is SRFD.

The protein belongs to the MCM family. Component of the mcm2-7 complex. The complex forms a toroidal hexameric ring with the proposed subunit order mcm2-mcm6-mcm4-mcm7-mcm3-mcm5. The heterodimers of mcm4/mcm6 and mcm3/mcm5 interact with mcm2 and mcm7. Interacts with sld3 and mcm10.

It localises to the nucleus. It carries out the reaction ATP + H2O = ADP + phosphate + H(+). Acts as a component of the MCM2-7 complex (MCM complex) which is the replicative helicase essential for 'once per cell cycle' DNA replication initiation and elongation in eukaryotic cells. Core component of CDC45-MCM-GINS (CMG) helicase, the molecular machine that unwinds template DNA during replication, and around which the replisome is built. The active ATPase sites in the MCM2-7 ring are formed through the interaction surfaces of two neighboring subunits such that a critical structure of a conserved arginine finger motif is provided in trans relative to the ATP-binding site of the Walker A box of the adjacent subunit. The six ATPase active sites, however, are likely to contribute differentially to the complex helicase activity. Required for the progression of S phase. This chain is DNA replication licensing factor mcm7 (mcm7), found in Schizosaccharomyces pombe (strain 972 / ATCC 24843) (Fission yeast).